The chain runs to 215 residues: MQAYQREFIRFAIERGVLRFGEFTLKSGRTSPYFFNAGLFNSGSALAQLGRFYASAVIESGLDFDVIFGPAYKGIPLGAATAIALAEQHQRDLPWCFNRKEAKDHGEGGTLVGAPLTGRVLIVDDVITAGTAIREVMQIIQAQNAEAAGVLIALNRQERGQGEGELSAIQEVERDYRMPVISIVSLEQVLEYLADDVQLKQHLPAVQAYREQYGI.

Lysine 26 contacts 5-phospho-alpha-D-ribose 1-diphosphate. 34–35 (FF) contributes to the orotate binding site. Residues 72–73 (YK), arginine 99, lysine 100, lysine 103, histidine 105, and 124–132 (DDVITAGTA) contribute to the 5-phospho-alpha-D-ribose 1-diphosphate site. 2 residues coordinate orotate: threonine 128 and arginine 156.

The protein belongs to the purine/pyrimidine phosphoribosyltransferase family. PyrE subfamily. As to quaternary structure, homodimer. Mg(2+) is required as a cofactor.

It carries out the reaction orotidine 5'-phosphate + diphosphate = orotate + 5-phospho-alpha-D-ribose 1-diphosphate. The protein operates within pyrimidine metabolism; UMP biosynthesis via de novo pathway; UMP from orotate: step 1/2. In terms of biological role, catalyzes the transfer of a ribosyl phosphate group from 5-phosphoribose 1-diphosphate to orotate, leading to the formation of orotidine monophosphate (OMP). This is Orotate phosphoribosyltransferase from Stutzerimonas stutzeri (strain A1501) (Pseudomonas stutzeri).